A 481-amino-acid chain; its full sequence is tRNA pseudouridine(38/39) synthase (481 aa).

The residue at position 2 (A2) is an N-acetylalanine. Residues 29-41 (KKEQAKNKEDSNI) are compositionally biased toward basic and acidic residues. Positions 29 to 50 (KKEQAKNKEDSNIRENSAGAGK) are disordered. The active-site Nucleophile is the D118. Y195 is a binding site for substrate. A phosphothreonine mark is found at T456, T466, and T468.

The protein belongs to the tRNA pseudouridine synthase TruA family.

The protein resides in the nucleus. The enzyme catalyses uridine(38/39) in tRNA = pseudouridine(38/39) in tRNA. In terms of biological role, formation of pseudouridine at position 39 in the anticodon stem and loop of transfer RNAs. The chain is tRNA pseudouridine(38/39) synthase (PUS3) from Homo sapiens (Human).